Consider the following 412-residue polypeptide: Circumsporozoite protein (412 aa).

The signal sequence occupies residues 1-18 (MMRKLAILSVSSFLFVEA). The segment at 69 to 328 (SRSLGENDDG…KNNNNEEPSD (260 aa)) is disordered. Positions 85–105 (NGREGKDEDKRDGNNEDNEKL) are enriched in basic and acidic residues. Residues 104–111 (KLRKPKHK) form a required for the binding to heparan sulfate proteoglycans (HSPGs) on the surface of host hepatocytes region. The segment at 112-116 (KLKQP) is region I; contains the proteolytic cleavage site. Residues 120 to 288 (NPDPNANPNV…PNANPNANPN (169 aa)) are compositionally biased toward low complexity. 41 tandem repeats follow at residues 123-126 (PNAN), 127-130 (PNVD), 131-134 (PNAN), 135-138 (PNVD), 139-142 (PNAN), 143-146 (PNVD), 147-150 (PNAN), 151-154 (PNAN), 155-158 (PNAN), 159-162 (PNAN), 163-166 (PNAN), 167-170 (PNAN), 171-174 (PNAN), 175-178 (PNAN), 179-182 (PNAN), 183-186 (PNAN), 187-190 (PNAN), 191-194 (PNAN), 195-198 (PNAN), 199-202 (PNAN), 203-206 (PNAN), 207-210 (PNVD), 211-214 (PNAN), 215-218 (PNAN), 219-222 (PNAN), 223-226 (PNAN), 227-230 (PNAN), 231-234 (PNAN), 235-238 (PNAN), 239-242 (PNAN), 243-246 (PNAN), 247-250 (PNAN), 251-254 (PNAN), 255-258 (PNAN), 259-262 (PNAN), 263-266 (PNAN), 267-270 (PNAN), 271-274 (PNAN), 275-278 (PNAN), 279-282 (PNAN), and 283-286 (PNAN). Residues 123–286 (PNANPNVDPN…ANPNANPNAN (164 aa)) are 41 X 4 AA tandem repeats of P-N-[AV]-[ND]. Positions 289–304 (KNNQGNGQGHNMPNDP) are enriched in polar residues. Low complexity predominate over residues 310 to 324 (ENANANNAVKNNNNE). In terms of domain architecture, TSP type-1 spans 337 to 390 (KIKNSISTEWSPCSVTCGNGIQVRIKPGSANKPKDELDYENDIEKKICKMEKCS). Cystine bridges form between C349-C384 and C353-C389. A glycan (O-linked (Fuc) threonine) is linked at T352. A lipid anchor (GPI-anchor amidated cysteine) is attached at C389. A propeptide spans 390 to 412 (SSVFNVVNSSIGLIMVLSFLFLN) (removed in mature form).

This sequence belongs to the plasmodium circumsporozoite protein family. In terms of processing, during host cell invasion, proteolytically cleaved at the cell membrane in the region I by a papain-like cysteine protease of parasite origin. Cleavage is triggered by the sporozoite contact with highly sulfated heparan sulfate proteoglycans (HSPGs) present on the host hepatocyte cell surface. Cleavage exposes the TSP type-1 (TSR) domain and is required for productive invasion of host hepatocytes but not for adhesion to the host cell membrane. Cleavage is dispensable for sporozoite development in the oocyst, motility and for traversal of host and vector cells. O-glycosylated; maybe by POFUT2.

Its subcellular location is the cell membrane. The protein localises to the cytoplasm. Its function is as follows. Essential sporozoite protein. In the mosquito vector, required for sporozoite development in the oocyst, migration through the vector hemolymph and entry into the vector salivary glands. In the vertebrate host, required for sporozoite migration through the host dermis and infection of host hepatocytes. Binds to highly sulfated heparan sulfate proteoglycans (HSPGs) on the surface of host hepatocytes. In terms of biological role, in the vertebrate host, binds to highly sulfated heparan sulfate proteoglycans (HSPGs) on the surface of host hepatocytes and is required for sporozoite invasion of the host hepatocytes. This is Circumsporozoite protein from Plasmodium falciparum.